The sequence spans 64 residues: Alpha-conotoxin-like Ai1.2 (64 aa).

The N-terminal stretch at 1–17 is a signal peptide; that stretch reads MFTVFLLVVLATTVVSS. Positions 18 to 43 are excised as a propeptide; that stretch reads TSGRRAFRGRNAAAKASGLVGLTDRR. 2 cysteine pairs are disulfide-bonded: cysteine 46–cysteine 52 and cysteine 47–cysteine 60. Residues 48–50 are ser-Xaa-Pro motif, crucial for potent interaction with nAChR; sequence SDP. Glycine 61 bears the Glycine amide mark.

The protein belongs to the conotoxin A superfamily. As to expression, expressed by the venom duct.

Its subcellular location is the secreted. In terms of biological role, alpha-conotoxins act on postsynaptic membranes, they bind to the nicotinic acetylcholine receptors (nAChR) and thus inhibit them. This is Alpha-conotoxin-like Ai1.2 from Conus ammiralis (Admiral cone).